Here is a 772-residue protein sequence, read N- to C-terminus: NAD(P)H-quinone oxidoreductase subunit 5, chloroplastic (772 aa).

15 helical membrane passes run 8-28 (IWIVPVCPFVASMSVGLGLFF), 39-59 (ICAIISIFLLGIAMFISFSIF), 87-107 (FLIDPLTSTMLVSVTSVGILV), 120-140 (GYVRFFAYLSLFTASMLGLVL), 147-167 (IYIFWELVGMCSYLLIGFWFS), 185-205 (GDFGLLLGILGTYWITGSFDI), 219-239 (NGVNLFLANMCALLLFLGPAA), 258-278 (TPISALIHAATMVAAGIFFVA), 291-311 (MNIISWVGGITALLGATIALA), 395-415 (GTTFLLGTLSLCGIPPFACFW), 425-445 (WIASASLGWIAWCTAGLTGFY), 574-594 (LFSLISLAIPTLFIGFIGVPF), 631-651 (IPSVSIALVGVSISFFIYGPV), 710-730 (WIIDGIVNGIGILSFFGGEGM), and 738-758 (IPSYLFGLIIGNILMLIILII).

This sequence belongs to the complex I subunit 5 family. In terms of assembly, NDH is composed of at least 16 different subunits, 5 of which are encoded in the nucleus.

Its subcellular location is the plastid. It localises to the chloroplast thylakoid membrane. The catalysed reaction is a plastoquinone + NADH + (n+1) H(+)(in) = a plastoquinol + NAD(+) + n H(+)(out). The enzyme catalyses a plastoquinone + NADPH + (n+1) H(+)(in) = a plastoquinol + NADP(+) + n H(+)(out). Its function is as follows. NDH shuttles electrons from NAD(P)H:plastoquinone, via FMN and iron-sulfur (Fe-S) centers, to quinones in the photosynthetic chain and possibly in a chloroplast respiratory chain. The immediate electron acceptor for the enzyme in this species is believed to be plastoquinone. Couples the redox reaction to proton translocation, and thus conserves the redox energy in a proton gradient. The sequence is that of NAD(P)H-quinone oxidoreductase subunit 5, chloroplastic (ndhF) from Angiopteris evecta (Mule's foot fern).